The chain runs to 227 residues: DNA repair protein RecO (227 aa).

Belongs to the RecO family.

In terms of biological role, involved in DNA repair and RecF pathway recombination. This chain is DNA repair protein RecO, found in Pseudomonas putida (strain GB-1).